The following is a 590-amino-acid chain: Putative ferric-chelate reductase 1 (590 aa).

Residues 2–22 (NPLGLFLIYLYTCALTPVSGY) traverse the membrane as a helical segment. A Reelin domain is found at 12–179 (YTCALTPVSG…APKIPSSTIP (168 aa)). Positions 217–330 (ECFFLSFRKD…RSYFIFLADG (114 aa)) constitute a DOMON domain. Positions 334–533 (DGLLYRHHRQ…VFVDLLLEAH (200 aa)) constitute a Cytochrome b561 domain. The helical transmembrane segment at 371-391 (LHGAMMFIAWMTTVSIGVIIA) threads the bilayer. Positions 372 and 413 each coordinate heme b. Helical transmembrane passes span 416–436 (LMIT…IYRG) and 445–465 (HPHL…LAVF). His445 is a heme b binding site. Asn478 is a glycosylation site (N-linked (GlcNAc...) asparagine). Position 481 (His481) interacts with heme b. Transmembrane regions (helical) follow at residues 482–502 (WATG…GMDL), 517–537 (IGFV…GFCL), and 567–587 (IVMT…LAAI).

This sequence belongs to the FRRS1 family. Heme b is required as a cofactor.

The protein localises to the membrane. Functionally, putative ferric-chelate reductases reduce Fe(3+) to Fe(2+) before its transport from the endosome to the cytoplasm. The polypeptide is Putative ferric-chelate reductase 1 (frrs1) (Xenopus laevis (African clawed frog)).